The primary structure comprises 242 residues: Probable transcriptional regulatory protein STH1004 (242 aa).

Belongs to the TACO1 family.

It is found in the cytoplasm. The protein is Probable transcriptional regulatory protein STH1004 of Symbiobacterium thermophilum (strain DSM 24528 / JCM 14929 / IAM 14863 / T).